Consider the following 190-residue polypeptide: Pyridoxamine 5'-phosphate oxidase C1952.08c homolog (190 aa).

Residues Ser62 and Lys69 each contribute to the FMN site.

This sequence belongs to the pyridoxamine 5'-phosphate oxidase family. Requires FMN as cofactor.

The protein resides in the cytoplasm. The protein localises to the nucleus. This is Pyridoxamine 5'-phosphate oxidase C1952.08c homolog from Schizosaccharomyces pombe (strain 972 / ATCC 24843) (Fission yeast).